The following is a 23-amino-acid chain: Large ribosomal subunit protein uL10 (23 aa).

It belongs to the universal ribosomal protein uL10 family. As to quaternary structure, part of the ribosomal stalk of the 50S ribosomal subunit. The N-terminus interacts with L11 and the large rRNA to form the base of the stalk. The C-terminus forms an elongated spine to which L12 dimers bind in a sequential fashion forming a multimeric L10(L12)X complex.

Functionally, forms part of the ribosomal stalk, playing a central role in the interaction of the ribosome with GTP-bound translation factors. This Klebsiella pneumoniae protein is Large ribosomal subunit protein uL10 (rplJ).